Consider the following 191-residue polypeptide: Protein GrpE (191 aa).

It belongs to the GrpE family. In terms of assembly, homodimer.

It is found in the cytoplasm. Participates actively in the response to hyperosmotic and heat shock by preventing the aggregation of stress-denatured proteins, in association with DnaK and GrpE. It is the nucleotide exchange factor for DnaK and may function as a thermosensor. Unfolded proteins bind initially to DnaJ; upon interaction with the DnaJ-bound protein, DnaK hydrolyzes its bound ATP, resulting in the formation of a stable complex. GrpE releases ADP from DnaK; ATP binding to DnaK triggers the release of the substrate protein, thus completing the reaction cycle. Several rounds of ATP-dependent interactions between DnaJ, DnaK and GrpE are required for fully efficient folding. This Listeria welshimeri serovar 6b (strain ATCC 35897 / DSM 20650 / CCUG 15529 / CIP 8149 / NCTC 11857 / SLCC 5334 / V8) protein is Protein GrpE.